The following is a 180-amino-acid chain: NADH-quinone oxidoreductase subunit I (180 aa).

4Fe-4S ferredoxin-type domains are found at residues Leu-50–Ala-80 and Glu-90–Asp-119. [4Fe-4S] cluster-binding residues include Cys-60, Cys-63, Cys-66, Cys-70, Cys-99, Cys-102, Cys-105, and Cys-109.

This sequence belongs to the complex I 23 kDa subunit family. As to quaternary structure, NDH-1 is composed of 13 different subunits. Subunits NuoA, H, J, K, L, M, N constitute the membrane sector of the complex. Requires [4Fe-4S] cluster as cofactor.

The protein resides in the cell inner membrane. It carries out the reaction a quinone + NADH + 5 H(+)(in) = a quinol + NAD(+) + 4 H(+)(out). Its function is as follows. NDH-1 shuttles electrons from NADH, via FMN and iron-sulfur (Fe-S) centers, to quinones in the respiratory chain. The immediate electron acceptor for the enzyme in this species is believed to be ubiquinone. Couples the redox reaction to proton translocation (for every two electrons transferred, four hydrogen ions are translocated across the cytoplasmic membrane), and thus conserves the redox energy in a proton gradient. The protein is NADH-quinone oxidoreductase subunit I of Pectobacterium atrosepticum (strain SCRI 1043 / ATCC BAA-672) (Erwinia carotovora subsp. atroseptica).